Here is a 233-residue protein sequence, read N- to C-terminus: Lipoprotein-releasing system ATP-binding protein LolD (233 aa).

The ABC transporter domain maps to 9-233; that stretch reads LAINAVSKVF…GILSQSETHR (225 aa). Residue 45–52 participates in ATP binding; sequence GSSGSGKS.

It belongs to the ABC transporter superfamily. Lipoprotein translocase (TC 3.A.1.125) family. In terms of assembly, the complex is composed of two ATP-binding proteins (LolD) and two transmembrane proteins (LolC and LolE).

It is found in the cell inner membrane. In terms of biological role, part of the ABC transporter complex LolCDE involved in the translocation of mature outer membrane-directed lipoproteins, from the inner membrane to the periplasmic chaperone, LolA. Responsible for the formation of the LolA-lipoprotein complex in an ATP-dependent manner. This chain is Lipoprotein-releasing system ATP-binding protein LolD, found in Shewanella denitrificans (strain OS217 / ATCC BAA-1090 / DSM 15013).